The sequence spans 600 residues: Elongation factor 4 (600 aa).

The tr-type G domain occupies 7 to 189 (SLIRNFSIIA…ALVQRLPAPT (183 aa)). Residues 19-24 (DHGKST) and 136-139 (NKID) contribute to the GTP site.

The protein belongs to the TRAFAC class translation factor GTPase superfamily. Classic translation factor GTPase family. LepA subfamily.

Its subcellular location is the cell inner membrane. It carries out the reaction GTP + H2O = GDP + phosphate + H(+). Required for accurate and efficient protein synthesis under certain stress conditions. May act as a fidelity factor of the translation reaction, by catalyzing a one-codon backward translocation of tRNAs on improperly translocated ribosomes. Back-translocation proceeds from a post-translocation (POST) complex to a pre-translocation (PRE) complex, thus giving elongation factor G a second chance to translocate the tRNAs correctly. Binds to ribosomes in a GTP-dependent manner. The chain is Elongation factor 4 from Gluconobacter oxydans (strain 621H) (Gluconobacter suboxydans).